The sequence spans 156 residues: Arginine repressor (156 aa).

Belongs to the ArgR family.

Its subcellular location is the cytoplasm. The protein operates within amino-acid biosynthesis; L-arginine biosynthesis [regulation]. In terms of biological role, regulates arginine biosynthesis genes. This chain is Arginine repressor, found in Shewanella putrefaciens (strain CN-32 / ATCC BAA-453).